The sequence spans 22 residues: Melittin-related peptide FQ-22-1 (22 aa).

At glutamine 22 the chain carries Glutamine amide.

In terms of tissue distribution, expressed by the skin glands.

Its subcellular location is the secreted. This Rana arvalis (Moor frog) protein is Melittin-related peptide FQ-22-1.